The following is a 150-amino-acid chain: Aspartate 1-decarboxylase (150 aa).

Ser-24 (schiff-base intermediate with substrate; via pyruvic acid) is an active-site residue. The residue at position 24 (Ser-24) is a Pyruvic acid (Ser). Residue Thr-56 coordinates substrate. The active-site Proton donor is Tyr-57. 72–74 (GAA) is a substrate binding site.

It belongs to the PanD family. In terms of assembly, heterooctamer of four alpha and four beta subunits. Pyruvate is required as a cofactor. In terms of processing, is synthesized initially as an inactive proenzyme, which is activated by self-cleavage at a specific serine bond to produce a beta-subunit with a hydroxyl group at its C-terminus and an alpha-subunit with a pyruvoyl group at its N-terminus.

The protein localises to the cytoplasm. The catalysed reaction is L-aspartate + H(+) = beta-alanine + CO2. Its pathway is cofactor biosynthesis; (R)-pantothenate biosynthesis; beta-alanine from L-aspartate: step 1/1. Catalyzes the pyruvoyl-dependent decarboxylation of aspartate to produce beta-alanine. The sequence is that of Aspartate 1-decarboxylase from Xanthobacter autotrophicus (strain ATCC BAA-1158 / Py2).